The following is a 101-amino-acid chain: Large ribosomal subunit protein bL27 (101 aa).

Residues 1–9 (MLLMNLQLF) constitute a propeptide that is removed on maturation.

It belongs to the bacterial ribosomal protein bL27 family. In terms of processing, the N-terminus is cleaved by ribosomal processing cysteine protease Prp.

The polypeptide is Large ribosomal subunit protein bL27 (Clostridium tetani (strain Massachusetts / E88)).